Reading from the N-terminus, the 422-residue chain is Serine protease HTRA2, mitochondrial (422 aa).

A mitochondrion-targeting transit peptide spans 1–17; it reads MALRGSHRLEVIFKRCI. A propeptide spanning residues 18–74 is cleaved from the precursor; that stretch reads ASPVFHSHAANRRSSQLAIKGTDPSSNGNSGQDQQNGEQKAKGWRRLVRFFVPFSLG. The span at 29-55 shows a compositional bias: polar residues; sequence RRSSQLAIKGTDPSSNGNSGQDQQNGE. The interval 29 to 56 is disordered; the sequence is RRSSQLAIKGTDPSSNGNSGQDQQNGEQ. Residues 64–82 form a helical membrane-spanning segment; that stretch reads LVRFFVPFSLGAAVSAAVI. 2 consecutive short sequence motifs (IAP-binding) follow at residues 75-78 and 94-97; these read AAVS and SKMT. Residues 139–302 form a serine protease region; sequence SNGSGFIIEQ…IPIDYVKVFL (164 aa). Catalysis depends on charge relay system residues His157, Asp189, and Ser266. Residues 325–410 form the PDZ domain; that stretch reads MGITMLTLTP…NLDIVILRGV (86 aa).

It belongs to the peptidase S1C family. As to quaternary structure, interacts with th/DIAP1 (via BIR 2 domain).

It is found in the mitochondrion intermembrane space. The protein resides in the mitochondrion membrane. The enzyme catalyses Cleavage of non-polar aliphatic amino-acids at the P1 position, with a preference for Val, Ile and Met. At the P2 and P3 positions, Arg is selected most strongly with a secondary preference for other hydrophilic residues.. Its function is as follows. Serine protease that shows proteolytic activity against a non-specific substrate beta-casein. Promotes or induces cell death either by direct binding to and inhibition of BIRC proteins (also called inhibitor of apoptosis proteins, IAPs), leading to an increase in caspase activity, or by a BIRC inhibition-independent, caspase-independent and serine protease activity-dependent mechanism. Can antagonize antiapoptotic activity of th/Diap1 by directly inducing the degradation of th/Diap1. The protein is Serine protease HTRA2, mitochondrial of Drosophila yakuba (Fruit fly).